A 335-amino-acid chain; its full sequence is MKLAVIPGDGIGPEVIAEALKVLDVVVPGVEKTEYDLGAKRYHATGEILPDSVLPELREHDAILLGAIGDPSVPSGVLERGLLLRTRFELDHHVNLRPSRLFTGVRSPLAGAPDIDFVVVREGTEGPYTGTGGAIRVRTPHEVATEVSTNTRFGIERVVRYAFAKAQARRKHLTLVHKTNVLTFAGSLWQRTVDEVGAEFPEVTVAYQHIDAATIHMVTDPGRFDVIVTDNLFGDIITDLAAAVSGGIGLAASGNIDASGTNPSMFEPVHGSAPDIAGQSKADPTAAILSVSLLLNHLGDTEAAARIDAAVAKDLAARSGTASTVEIGDRIAAAV.

Substrate-binding residues include R87, R97, R121, and D211. Mg(2+) contacts are provided by D211, D235, and D239. Residue 271-283 coordinates NAD(+); sequence GSAPDIAGQSKAD.

It belongs to the isocitrate and isopropylmalate dehydrogenases family. LeuB type 2 subfamily. In terms of assembly, homodimer. The cofactor is Mg(2+). Mn(2+) serves as cofactor.

The protein localises to the cytoplasm. The enzyme catalyses (2R,3S)-3-isopropylmalate + NAD(+) = 4-methyl-2-oxopentanoate + CO2 + NADH. It functions in the pathway amino-acid biosynthesis; L-leucine biosynthesis; L-leucine from 3-methyl-2-oxobutanoate: step 3/4. Its function is as follows. Catalyzes the oxidation of 3-carboxy-2-hydroxy-4-methylpentanoate (3-isopropylmalate) to 3-carboxy-4-methyl-2-oxopentanoate. The product decarboxylates to 4-methyl-2 oxopentanoate. This chain is 3-isopropylmalate dehydrogenase, found in Nocardia farcinica (strain IFM 10152).